We begin with the raw amino-acid sequence, 113 residues long: Non-structural protein 1 (113 aa).

This sequence belongs to the pneumovirus non-structural protein 1 family.

Its subcellular location is the host cytoplasm. It localises to the host mitochondrion. Its function is as follows. May play a minor role in antagonizing the type I IFN-mediated antiviral response. Additionally, NS1 may serve some inhibitory role in viral transcription and RNA replication. This is Non-structural protein 1 (1C) from Mus musculus (Mouse).